Here is a 364-residue protein sequence, read N- to C-terminus: Chaperone protein DnaJ (364 aa).

The 66-residue stretch at 4–69 (DYYEILGLSK…NKKAKYDRFG (66 aa)) folds into the J domain. The segment at 135 to 213 (GYKNNINITR…CKGKGSLTKQ (79 aa)) adopts a CR-type zinc-finger fold. Zn(2+) is bound by residues Cys-148, Cys-151, Cys-165, Cys-168, Cys-187, Cys-190, Cys-201, and Cys-204. CXXCXGXG motif repeat units lie at residues 148–155 (CDSCLGKK), 165–172 (CNMCNGSG), 187–194 (CSKCYGEG), and 201–208 (CKSCKGKG).

The protein belongs to the DnaJ family. In terms of assembly, homodimer. Requires Zn(2+) as cofactor.

The protein localises to the cytoplasm. Its function is as follows. Participates actively in the response to hyperosmotic and heat shock by preventing the aggregation of stress-denatured proteins and by disaggregating proteins, also in an autonomous, DnaK-independent fashion. Unfolded proteins bind initially to DnaJ; upon interaction with the DnaJ-bound protein, DnaK hydrolyzes its bound ATP, resulting in the formation of a stable complex. GrpE releases ADP from DnaK; ATP binding to DnaK triggers the release of the substrate protein, thus completing the reaction cycle. Several rounds of ATP-dependent interactions between DnaJ, DnaK and GrpE are required for fully efficient folding. Also involved, together with DnaK and GrpE, in the DNA replication of plasmids through activation of initiation proteins. The chain is Chaperone protein DnaJ from Borreliella burgdorferi (strain ATCC 35210 / DSM 4680 / CIP 102532 / B31) (Borrelia burgdorferi).